We begin with the raw amino-acid sequence, 197 residues long: MDIEMIEVILLAIALAMDAFAVSIGLGAKSQKQSSAYVLRLAVYAALYFGIAQGVMPLIGYLLGAVLLGWLATAAPWIGGGILIVLGAKMLYEAFNGEIEAVLEDGFDENIRKKINHRMMFTLAIATSIDAMAAGFTLNLLALNAWLACLIIAIVTAGFGFFGIYLGKSSGTWLEDKAEILGGLVLIAIGVKVMLFS.

Helical transmembrane passes span 8-28, 43-63, 66-86, 123-143, 146-166, and 177-197; these read VILL…GLGA, VYAA…GYLL, VLLG…LIVL, LAIA…LLAL, WLAC…GIYL, and KAEI…MLFS.

This sequence belongs to the MntP (TC 9.B.29) family.

Its subcellular location is the cell inner membrane. Functionally, probably functions as a manganese efflux pump. The polypeptide is Putative manganese efflux pump MntP (Psychrobacter arcticus (strain DSM 17307 / VKM B-2377 / 273-4)).